The chain runs to 873 residues: Alanine--tRNA ligase (873 aa).

Residues H563, H567, C665, and H669 each coordinate Zn(2+).

This sequence belongs to the class-II aminoacyl-tRNA synthetase family. Requires Zn(2+) as cofactor.

It localises to the cytoplasm. It carries out the reaction tRNA(Ala) + L-alanine + ATP = L-alanyl-tRNA(Ala) + AMP + diphosphate. In terms of biological role, catalyzes the attachment of alanine to tRNA(Ala) in a two-step reaction: alanine is first activated by ATP to form Ala-AMP and then transferred to the acceptor end of tRNA(Ala). Also edits incorrectly charged Ser-tRNA(Ala) and Gly-tRNA(Ala) via its editing domain. This chain is Alanine--tRNA ligase, found in Parabacteroides distasonis (strain ATCC 8503 / DSM 20701 / CIP 104284 / JCM 5825 / NCTC 11152).